The sequence spans 1193 residues: DNA-directed RNA polymerase subunit beta (1193 aa).

Positions 1153–1162 (EMRDLEDDED) are enriched in acidic residues. Residues 1153–1193 (EMRDLEDDEDAKQNEGLSLPNDEESEELVSADAERDVVTKE) form a disordered region. Positions 1184-1193 (DAERDVVTKE) are enriched in basic and acidic residues.

It belongs to the RNA polymerase beta chain family. As to quaternary structure, the RNAP catalytic core consists of 2 alpha, 1 beta, 1 beta' and 1 omega subunit. When a sigma factor is associated with the core the holoenzyme is formed, which can initiate transcription.

It catalyses the reaction RNA(n) + a ribonucleoside 5'-triphosphate = RNA(n+1) + diphosphate. DNA-dependent RNA polymerase catalyzes the transcription of DNA into RNA using the four ribonucleoside triphosphates as substrates. The chain is DNA-directed RNA polymerase subunit beta from Bacillus licheniformis (strain ATCC 14580 / DSM 13 / JCM 2505 / CCUG 7422 / NBRC 12200 / NCIMB 9375 / NCTC 10341 / NRRL NRS-1264 / Gibson 46).